The chain runs to 378 residues: Acetylornithine deacetylase (378 aa).

Zn(2+) is bound at residue H76. Residue D78 is part of the active site. D108 serves as a coordination point for Zn(2+). E140 is a catalytic residue. Zn(2+) contacts are provided by E141, E165, and H351.

It belongs to the peptidase M20A family. ArgE subfamily. In terms of assembly, homodimer. It depends on Zn(2+) as a cofactor. The cofactor is Co(2+). Glutathione is required as a cofactor.

The protein resides in the cytoplasm. It catalyses the reaction N(2)-acetyl-L-ornithine + H2O = L-ornithine + acetate. It functions in the pathway amino-acid biosynthesis; L-arginine biosynthesis; L-ornithine from N(2)-acetyl-L-ornithine (linear): step 1/1. Its function is as follows. Catalyzes the hydrolysis of the amide bond of N(2)-acetylated L-amino acids. Cleaves the acetyl group from N-acetyl-L-ornithine to form L-ornithine, an intermediate in L-arginine biosynthesis pathway, and a branchpoint in the synthesis of polyamines. The chain is Acetylornithine deacetylase from Vibrio atlanticus (strain LGP32) (Vibrio splendidus (strain Mel32)).